The primary structure comprises 178 residues: Endoribonuclease YbeY (178 aa).

His-118, His-122, and His-128 together coordinate Zn(2+). The interval 156 to 178 is disordered; that stretch reads YQQDRQDERDRRLLDKSRYFDEP. Basic and acidic residues predominate over residues 159–178; sequence DRQDERDRRLLDKSRYFDEP.

This sequence belongs to the endoribonuclease YbeY family. Zn(2+) serves as cofactor.

The protein localises to the cytoplasm. Single strand-specific metallo-endoribonuclease involved in late-stage 70S ribosome quality control and in maturation of the 3' terminus of the 16S rRNA. This is Endoribonuclease YbeY from Mycobacterium marinum (strain ATCC BAA-535 / M).